Reading from the N-terminus, the 366-residue chain is MNKVVLLCRPGFEKECAAEITDKAGRQEIFGFARVKENAGYVIYECYQAEDGDKLIRELPFSSLIFARQWFVVGELLQHLPPEDRITPIVGMLQGVVEKGGELRVEVADTNESKELLKFCRKFTVPLRAALRDAGVLANYETPKRPVVHVFFIAPGCCYTGYSYSNNNSPFYMGIPRLKFPADAPSRSTLKLEEAFHVFIPADEWDERLANGMWAVDLGACPGGWTYQLVKRNMWVYSVDNGPMAQSLMDTGQVTWLREDGFKFRPTRNNISWMVCDMVEKPAKVAALMAQWLVNGWCRETIFNLKLPMKKRYEEVSHNLAYIQAQLDEHGINAQIQARQLYHDREEVTVHVRRIWAAVGGRRDER.

S-adenosyl-L-methionine contacts are provided by residues Ser-188, 221-224 (CPGG), Asp-240, Asp-260, and Asp-277. Lys-306 (proton acceptor) is an active-site residue.

It belongs to the class I-like SAM-binding methyltransferase superfamily. RNA methyltransferase RlmE family. RlmM subfamily. As to quaternary structure, monomer.

The protein localises to the cytoplasm. The catalysed reaction is cytidine(2498) in 23S rRNA + S-adenosyl-L-methionine = 2'-O-methylcytidine(2498) in 23S rRNA + S-adenosyl-L-homocysteine + H(+). Functionally, catalyzes the 2'-O-methylation at nucleotide C2498 in 23S rRNA. The chain is Ribosomal RNA large subunit methyltransferase M from Escherichia fergusonii (strain ATCC 35469 / DSM 13698 / CCUG 18766 / IAM 14443 / JCM 21226 / LMG 7866 / NBRC 102419 / NCTC 12128 / CDC 0568-73).